We begin with the raw amino-acid sequence, 259 residues long: Protein N-terminal and lysine N-methyltransferase efm7 (259 aa).

Residues W56, 83–85, D105, W139, and A163 contribute to the S-adenosyl-L-methionine site; that span reads GAA.

The protein belongs to the class I-like SAM-binding methyltransferase superfamily. EFM7 family.

It localises to the cytoplasm. S-adenosyl-L-methionine-dependent protein methyltransferase that trimethylates the N-terminal glycine 'Gly-2' of elongation factor 1-alpha, before also catalyzing the mono- and dimethylation of 'Lys-3'. The sequence is that of Protein N-terminal and lysine N-methyltransferase efm7 from Aspergillus fumigatus (strain ATCC MYA-4609 / CBS 101355 / FGSC A1100 / Af293) (Neosartorya fumigata).